The following is a 167-amino-acid chain: Transcription factor HES-5 (167 aa).

The bHLH domain maps to 16–72 (KNRLRKPVVEKMRRDRINSSIEQLKLLLEQEFARHQPNSKLEKADILEMAVSYLKHS). An Orange domain is found at 88–119 (YSEGYSWCLQEAVQFLTLHAASDTQMKLLYHF). Residues 124–138 (APAAPAKEPPAPGAA) show a composition bias toward pro residues. The segment at 124–167 (APAAPAKEPPAPGAAPQPARSSAKAAAAAVSTSRQPACGLWRPW) is disordered. Over residues 139–160 (PQPARSSAKAAAAAVSTSRQPA) the composition is skewed to low complexity. Positions 164 to 167 (WRPW) match the WRPW motif motif.

In terms of assembly, transcription repression requires formation of a complex with a corepressor protein of the Groucho/TLE family.

Its subcellular location is the nucleus. In terms of biological role, transcriptional repressor of genes that require a bHLH protein for their transcription. Plays an important role as neurogenesis negative regulator. The chain is Transcription factor HES-5 (Hes5) from Mus musculus (Mouse).